The sequence spans 64 residues: Conotoxin Am1.1 (64 aa).

A signal peptide spans 1–22; the sequence is MSCLPVFVILLLLTASGPSVDA. Residues 23–49 constitute a propeptide that is removed on maturation; that stretch reads RLKTKDDVPLSSFRDNAKSTLRRLQDK. Proline 60 is subject to 4-hydroxyproline; partial; in major form.

The protein belongs to the conotoxin T superfamily. Post-translationally, contains 2 disulfide bonds. In terms of tissue distribution, expressed by the venom duct.

The protein resides in the secreted. In terms of biological role, probable toxin that inhibits ion channels. The protein is Conotoxin Am1.1 of Conus amadis (Amadis cone).